Here is a 102-residue protein sequence, read N- to C-terminus: Death-associated protein 1 (102 aa).

A disordered region spans residues 1–102 (MSSPPEGKLE…RTQHIQQPRK (102 aa)). At serine 2 the chain carries N-acetylserine. At serine 3 the chain carries Phosphoserine; by MTOR. Lysine 29 carries the N6-acetyllysine modification. The span at 32–43 (HTGDTKEEKDKD) shows a compositional bias: basic and acidic residues. Position 49 is a phosphoserine (serine 49). Phosphoserine; by MTOR is present on serine 51. Serine 91 carries the post-translational modification Phosphoserine. The segment covering 92-102 (PRTQHIQQPRK) has biased composition (polar residues).

This sequence belongs to the DAP-DAPL1 family. Associates with ribosomes; inhibiting translation. Interacts with eiF5a (EIF5A and EIF5A2); inhibiting translation. Phosphorylated. Phosphorylation by MTOR inhibits the suppressive activity of DAP toward autophagy.

Ribosome-binding protein involved in ribosome hibernation, a process during which ribosomes are stabilized in an inactive state and preserved from proteasomal degradation. Acts via its association with eiF5a (EIF5A and EIF5A2) at the polypeptide exit tunnel of the ribosome, preventing mRNA translation. Involved in ribosome hibernation in the mature oocyte by preventing mRNA translation, leading to ribosome inactivation. Ribosomes, which are produced in large quantities during oogenesis, are stored and translationally repressed in the oocyte and early embryo. Also acts as a negative regulator of autophagy. Involved in mediating interferon-gamma-induced cell death. The polypeptide is Death-associated protein 1 (Homo sapiens (Human)).